The following is a 509-amino-acid chain: Transcription factor SOX-9 (509 aa).

2 disordered regions span residues 1-67 and 160-273; these read MNLL…SEED and RLRV…FRDV. Positions 30–41 are enriched in low complexity; the sequence is SAGSPCPSGSGS. Positions 42–52 are enriched in polar residues; it reads DTENTRPQENT. Composition is skewed to basic and acidic residues over residues 56 to 67 and 160 to 174; these read GEPDLKKESEED and RLRV…DYKY. Residues 63 to 103 form a dimerization (DIM) region; it reads ESEEDKFPVCIREAVSQVLKGYDWTLVPMPVRVNGSSKNKP. The tract at residues 63–103 is PQA; the sequence is ESEEDKFPVCIREAVSQVLKGYDWTLVPMPVRVNGSSKNKP. Ser64 is subject to Phosphoserine. The HMG box DNA-binding region spans 105-173; it reads VKRPMNAFMV…QHKKDHPDYK (69 aa). A Phosphoserine modification is found at Ser211. Residues 224–307 form a transactivation domain (TAM) region; the sequence is PGEHSGQSQG…LPPNGHPGVP (84 aa). 2 consecutive short sequence motifs (9aaTAD) follow at residues 275–284 and 290–298; these read IGELSSDVIS and DVNEFDQYL. The segment at 334-415 is disordered; that stretch reads VWMSKQQAPP…HYSEQQQHSP (82 aa). Residues 341 to 376 show a composition bias toward pro residues; that stretch reads APPPPPQQPPQAPPAPQAPPQPQAAPPQQPAAPPQQ. Polar residues predominate over residues 380-415; the sequence is HTLTTLSSEPGQSQRTHIKTEQLSPSHYSEQQQHSP. The interval 394-509 is transactivation domain (TAC); that stretch reads RTHIKTEQLS…QPVYTQLTRP (116 aa). Residue Lys398 forms a Glycyl lysine isopeptide (Lys-Gly) (interchain with G-Cter in ubiquitin) linkage. The 9aaTAD 3 motif lies at 460–468; it reads TGLYSTFTY. The segment at 479–509 is disordered; it reads PIADTSGVPSIPQTHSPQHWEQPVYTQLTRP. The segment covering 485–509 has biased composition (polar residues); it reads GVPSIPQTHSPQHWEQPVYTQLTRP.

In terms of assembly, homodimer; homodimerization is required for activity. Interacts (via C-terminus) with ZNF219; forming a complex that binds to the COL2A1 promoter and activates COL2A1 expression. Interacts with DDRGK1. Interacts with EP300/p300. Interacts with beta-catenin (CTNNB1); inhibiting CTNNB1 activity by competing with the binding sites of TCF/LEF within CTNNB1. Post-translationally, acetylated; acetylation impairs nuclear localization and ability to transactivate expression of target genes. Deacetylated by SIRT1. In terms of processing, phosphorylation at Ser-64 and Ser-211 by PKA increases transcriptional activity and may help delay chondrocyte maturation downstream of PTHLH/PTHrP signaling. Phosphorylation at either Ser-64 or Ser-211 is required for sumoylation, but phosphorylation is not dependent on sumoylation. Phosphorylated on tyrosine residues; tyrosine dephosphorylation by PTPN11/SHP2 blocks SOX9 phosphorylation by PKA and subsequent SUMOylation. Sumoylated; phosphorylation at either Ser-64 or Ser-211 is required for sumoylation. Sumoylation is induced by BMP signaling pathway. Post-translationally, ubiquitinated; ubiquitination leads to proteasomal degradation and is negatively regulated by DDRGK1.

It is found in the nucleus. Transcription factor that plays a key role in chondrocytes differentiation and skeletal development. Specifically binds the 5'-ACAAAG-3' DNA motif present in enhancers and super-enhancers and promotes expression of genes important for chondrogenesis, including cartilage matrix protein-coding genes COL2A1, COL4A2, COL9A1, COL11A2 and ACAN, SOX5 and SOX6. Also binds to some promoter regions. Plays a central role in successive steps of chondrocyte differentiation. Absolutely required for precartilaginous condensation, the first step in chondrogenesis during which skeletal progenitors differentiate into prechondrocytes. Together with SOX5 and SOX6, required for overt chondrogenesis when condensed prechondrocytes differentiate into early stage chondrocytes, the second step in chondrogenesis. Later, required to direct hypertrophic maturation and block osteoblast differentiation of growth plate chondrocytes: maintains chondrocyte columnar proliferation, delays prehypertrophy and then prevents osteoblastic differentiation of chondrocytes by lowering beta-catenin (CTNNB1) signaling and RUNX2 expression. Also required for chondrocyte hypertrophy, both indirectly, by keeping the lineage fate of chondrocytes, and directly, by remaining present in upper hypertrophic cells and transactivating COL10A1 along with MEF2C. Low lipid levels are the main nutritional determinant for chondrogenic commitment of skeletal progenitor cells: when lipids levels are low, FOXO (FOXO1 and FOXO3) transcription factors promote expression of SOX9, which induces chondrogenic commitment and suppresses fatty acid oxidation. Mechanistically, helps, but is not required, to remove epigenetic signatures of transcriptional repression and deposit active promoter and enhancer marks at chondrocyte-specific genes. Acts in cooperation with the Hedgehog pathway-dependent GLI (GLI1 and GLI3) transcription factors. In addition to cartilage development, also acts as a regulator of proliferation and differentiation in epithelial stem/progenitor cells: involved in the lung epithelium during branching morphogenesis, by balancing proliferation and differentiation and regulating the extracellular matrix. Controls epithelial branching during kidney development. This chain is Transcription factor SOX-9 (SOX9), found in Callithrix jacchus (White-tufted-ear marmoset).